Reading from the N-terminus, the 1263-residue chain is Kinesin-like protein KIN-12E (1263 aa).

The interval Pro-21–His-44 is disordered. Residues Glu-35–His-44 are compositionally biased toward polar residues. The region spanning Asn-93–Ile-430 is the Kinesin motor domain. Gly-174 to Thr-181 is a binding site for ATP. Coiled-coil stretches lie at residues Ser-679 to Ser-737, Ala-764 to Asn-805, Ala-831 to Leu-881, Ser-905 to Glu-966, Thr-1091 to Glu-1168, and Leu-1193 to Leu-1251.

The protein belongs to the TRAFAC class myosin-kinesin ATPase superfamily. Kinesin family. KIN-12 subfamily.

In Arabidopsis thaliana (Mouse-ear cress), this protein is Kinesin-like protein KIN-12E.